A 628-amino-acid chain; its full sequence is Chaperone protein HtpG (628 aa).

The segment at 1-337 (MSEKKYTFET…SADLPLNVSR (337 aa)) is a; substrate-binding. Residues 338–554 (EILQHNKVID…DYGMSLHMQK (217 aa)) form a b region. Residues 555-628 (MMEEAGQSFM…FVKLVNKYIR (74 aa)) form a c region.

This sequence belongs to the heat shock protein 90 family. Homodimer.

It is found in the cytoplasm. Its function is as follows. Molecular chaperone. Has ATPase activity. In Francisella tularensis subsp. tularensis (strain FSC 198), this protein is Chaperone protein HtpG.